A 93-amino-acid polypeptide reads, in one-letter code: Putative septation protein SpoVG (93 aa).

The protein belongs to the SpoVG family.

In terms of biological role, could be involved in septation. The polypeptide is Putative septation protein SpoVG (Alkaliphilus oremlandii (strain OhILAs) (Clostridium oremlandii (strain OhILAs))).